An 80-amino-acid polypeptide reads, in one-letter code: uncharacterized protein (80 aa).

The N-terminal stretch at 1 to 23 (MKWNNMLKAAGIAVLLFSVFAYA) is a signal peptide.

This is an uncharacterized protein from Bacillus subtilis (strain 168).